The sequence spans 235 residues: Octanoyltransferase (235 aa).

Positions 37–220 constitute a BPL/LPL catalytic domain; it reads AGGPDTLLLL…AVNDALDGWL (184 aa). Substrate-binding positions include 78–85, 150–152, and 163–165; these read RGGKITWH, AIG, and GFA. Cys-181 acts as the Acyl-thioester intermediate in catalysis.

Belongs to the LipB family.

It localises to the cytoplasm. The enzyme catalyses octanoyl-[ACP] + L-lysyl-[protein] = N(6)-octanoyl-L-lysyl-[protein] + holo-[ACP] + H(+). It participates in protein modification; protein lipoylation via endogenous pathway; protein N(6)-(lipoyl)lysine from octanoyl-[acyl-carrier-protein]: step 1/2. Functionally, catalyzes the transfer of endogenously produced octanoic acid from octanoyl-acyl-carrier-protein onto the lipoyl domains of lipoate-dependent enzymes. Lipoyl-ACP can also act as a substrate although octanoyl-ACP is likely to be the physiological substrate. This Mycobacterium leprae (strain Br4923) protein is Octanoyltransferase.